The sequence spans 534 residues: MGCVQCKDKEATKLTDERDGSLTQSSGYRYGTDPTPQHYPSFGVTSIPNYNNFHATGGQGLTVFGGVNSSSHTGTLRTRGGTGVTLFEALYDYEARTEDDLSFHKGEKFQILNSSEGDWWEARSLTTGETGYIPSNYVAPVDSIQAEEWYFGKLGRKDAERQLLSFGNPRGTFLIRESETTKGAYSLSIRDWDDMKGDHVKHYKIRKLDNGGYYITTRAQFETLQQLVQHYSEKADGLCFNLTVIATNNTPQTVGLAKDAWEVARDSLFLEQKLGQGCFAEVWRGTWNGNTKVAIKTLKPGTMSPESFLEEAQIMKKLKHDKLVQLYAVVSRRPIYIVTEYMSKGSLLIFLKDGEGRALKLPNLVDMAAQVAAGMAYIERMNYIHRDLRSANILVGNGLICKIADFGLARLIEDNEYTARQGAKFPIKWTAPEAALYGRFTIKSDVWSFGILLTELVTKGRVPYPGMNNREVLEQVERGYRMPCPQDCPISLHELMIHCWKKDPEERPTFEYLQGFLEDYFTATEPQYQPGDNL.

Gly2 carries the N-myristoyl glycine lipid modification. S-palmitoyl cysteine attachment occurs at residues Cys3 and Cys6. Thr12 is subject to Phosphothreonine; by PKC. Positions 15–39 are disordered; it reads TDERDGSLTQSSGYRYGTDPTPQHY. In terms of domain architecture, SH3 spans 82–143; sequence TGVTLFEALY…PSNYVAPVDS (62 aa). One can recognise an SH2 domain in the interval 149-246; it reads WYFGKLGRKD…GLCFNLTVIA (98 aa). A Protein kinase domain is found at 268-521; it reads LFLEQKLGQG…YLQGFLEDYF (254 aa). ATP-binding positions include 274-282 and Lys296; that span reads LGQGCFAEV. Asp387 acts as the Proton acceptor in catalysis. Tyr417 carries the phosphotyrosine; by autocatalysis modification. Tyr528 is subject to Phosphotyrosine.

Belongs to the protein kinase superfamily. Tyr protein kinase family. SRC subfamily. Associates through its SH3 domain, to the p85 subunit of phosphatidylinositol 3-kinase. It depends on Mn(2+) as a cofactor. Thymus and spleen.

It is found in the cytoplasm. The protein localises to the nucleus. Its subcellular location is the cell membrane. The protein resides in the perikaryon. It catalyses the reaction L-tyrosyl-[protein] + ATP = O-phospho-L-tyrosyl-[protein] + ADP + H(+). Inhibited by phosphorylation of Tyr-528 by leukocyte common antigen and activated by dephosphorylation of this site. In terms of biological role, tyrosine-protein kinase implicated in the control of cell growth. Plays a role in the regulation of intracellular calcium levels. Required in brain development and mature brain function with important roles in the regulation of axon growth, axon guidance, and neurite extension. Role in CNTN1-mediated signaling. The sequence is that of Tyrosine-protein kinase Fyn (FYN) from Gallus gallus (Chicken).